The chain runs to 343 residues: Putative mediator of RNA polymerase II transcription subunit 4 (343 aa).

Positions 86-125 (LKKLEKHQKIQKEITEIQKEIEEKDKLISTLALNLKDIES) form a coiled coil. The interval 247 to 343 (ISSPFSIGGN…DEESEEVEWD (97 aa)) is disordered. The segment covering 271 to 316 (QQQQQQQQQPQQQLSQSQQSQQQTESELQPIQSILQPPQQLNIDLD) has biased composition (low complexity). Residues 317-343 (LNPDLDSSGDDDDEDDDDEESEEVEWD) are compositionally biased toward acidic residues.

It belongs to the Mediator complex subunit 4 family. In terms of assembly, component of the Mediator complex.

The protein resides in the nucleus. In terms of biological role, component of the Mediator complex, a coactivator involved in the regulated transcription of nearly all RNA polymerase II-dependent genes. Mediator functions as a bridge to convey information from gene-specific regulatory proteins to the basal RNA polymerase II transcription machinery. Mediator is recruited to promoters by direct interactions with regulatory proteins and serves as a scaffold for the assembly of a functional preinitiation complex with RNA polymerase II and the general transcription factors. The protein is Putative mediator of RNA polymerase II transcription subunit 4 (med4) of Dictyostelium discoideum (Social amoeba).